The chain runs to 497 residues: Xylooligosaccharide oxidase (497 aa).

Positions 1–16 are cleaved as a signal peptide; the sequence is MHLLPLTVSATAVVSA. Residues Cys30 and Cys79 are joined by a disulfide bond. 2 N-linked (GlcNAc...) asparagine glycosylation sites follow: Asn42 and Asn117. Residues 57 to 230 enclose the FAD-binding PCMH-type domain; sequence LPYTPAAIAK…ASFRFKTFAA (174 aa). The 6-(S-cysteinyl)-8alpha-(pros-histidyl)-FAD (His-Cys) cross-link spans 94–155; it reads HSYASFGLGG…GKRAFSHGTC (62 aa). Thr154 provides a ligand contact to substrate. Asn192, Asn233, and Asn245 each carry an N-linked (GlcNAc...) asparagine glycan. Arg272 serves as a coordination point for substrate. N-linked (GlcNAc...) asparagine glycosylation is found at Asn289 and Asn307. Substrate-binding residues include Glu412 and Tyr451.

This sequence belongs to the oxygen-dependent FAD-linked oxidoreductase family. Requires FAD as cofactor. The FAD cofactor is bound via a bicovalent 6-S-cysteinyl, 8alpha-N1-histidyl FAD linkage.

The protein resides in the secreted. The enzyme catalyses D-xylobiose + O2 = D-xylobiono-1,5-lactone + H2O2. The catalysed reaction is D-xylotriose + O2 = D-xylotriono-1,5-lactone + H2O2. It catalyses the reaction D-xylotetraose + O2 = D-xylotetraono-1,5-lactone + H2O2. Functionally, catalyzes the selective oxidation of C1 hydroxyl moieties on mono-, oligo- and polysaccharides with concomitant reduction of molecular oxygen to hydrogen peroxide. This results in the formation of the corresponding lactones, which typically undergo spontaneous hydrolysis. Xylooligosaccharide oxidase is able to oxidize a variety of substrates including D-xylose, D-cellobiose, lactose and arabinose. The enzyme acts primarily on xylooligosaccharides, indicating that it prefers pentose-based oligosaccharides over hexose-based oligosaccharides. This chain is Xylooligosaccharide oxidase, found in Thermothelomyces thermophilus (strain ATCC 42464 / BCRC 31852 / DSM 1799) (Sporotrichum thermophile).